Here is a 114-residue protein sequence, read N- to C-terminus: Notch-regulated ankyrin repeat-containing protein (114 aa).

2 ANK repeats span residues 50 to 79 (EGQT…DIRL) and 83 to 112 (DGWS…YSSS).

This sequence belongs to the NRARP family. In terms of assembly, forms a ternary complex with the intracellular domain (ICD) of notch1 and rbpj/suh.

Promotes loss of intracellular domain (ICD) of Notch1 in embryos. By down-regulating ICD levels, could function as a negative feedback regulator of Notch signaling that attenuates ICD-mediated transcription. Involved in angiogenesis. May be involved in somitogenesis. This is Notch-regulated ankyrin repeat-containing protein (nrarp) from Xenopus tropicalis (Western clawed frog).